A 327-amino-acid chain; its full sequence is Tryptophan--tRNA ligase (327 aa).

ATP-binding positions include 9 to 11 (QPS) and 17 to 18 (GN). The 'HIGH' region motif lies at 10 to 18 (PSGTLTLGN). Residue D132 participates in L-tryptophan binding. Residues 144-146 (GDD), I183, and 192-196 (KMSKS) each bind ATP. Positions 192 to 196 (KMSKS) match the 'KMSKS' region motif.

The protein belongs to the class-I aminoacyl-tRNA synthetase family. Homodimer.

It is found in the cytoplasm. It catalyses the reaction tRNA(Trp) + L-tryptophan + ATP = L-tryptophyl-tRNA(Trp) + AMP + diphosphate + H(+). In terms of biological role, catalyzes the attachment of tryptophan to tRNA(Trp). The sequence is that of Tryptophan--tRNA ligase from Oceanobacillus iheyensis (strain DSM 14371 / CIP 107618 / JCM 11309 / KCTC 3954 / HTE831).